Reading from the N-terminus, the 471-residue chain is 1,3-beta-glucanosyltransferase GAS4 (471 aa).

A signal peptide spans 1–21 (MMVFSSTFIFLILELVVLCEA). C70 and C99 are oxidised to a cystine. Y88 serves as a coordination point for (1,3-beta-D-glucosyl)n. N-linked (GlcNAc...) asparagine glycosylation is present at N151. The (1,3-beta-D-glucosyl)n site is built by N160, E161, D203, and R208. E161 serves as the catalytic Proton donor. Intrachain disulfides connect C217/C354 and C238/C269. E266 functions as the Nucleophile in the catalytic mechanism. Y298 is a binding site for (1,3-beta-D-glucosyl)n. N398 is a glycosylation site (N-linked (GlcNAc...) asparagine). N447 carries GPI-anchor amidated asparagine lipidation. The propeptide at 448–471 (SASISGPLLPLGLCLLFFTFSLFF) is removed in mature form.

This sequence belongs to the glycosyl hydrolase 72 family.

The protein localises to the cell membrane. In terms of biological role, splits internally a 1,3-beta-glucan molecule and transfers the newly generated reducing end (the donor) to the non-reducing end of another 1,3-beta-glucan molecule (the acceptor) forming a 1,3-beta linkage, resulting in the elongation of 1,3-beta-glucan chains in the cell wall. Involved in spore wall assembly. This chain is 1,3-beta-glucanosyltransferase GAS4 (GAS4), found in Saccharomyces cerevisiae (strain ATCC 204508 / S288c) (Baker's yeast).